Consider the following 154-residue polypeptide: Interleukin-2 (154 aa).

The first 20 residues, 1–20, serve as a signal peptide directing secretion; that stretch reads MYKIQLLSCIALTLILVTNS. The cysteines at positions 78 and 126 are disulfide-linked. Residue asparagine 111 is glycosylated (N-linked (GlcNAc...) asparagine).

It belongs to the IL-2 family.

The protein localises to the secreted. Functionally, cytokine produced by activated CD4-positive helper T-cells and to a lesser extend activated CD8-positive T-cells and natural killer (NK) cells that plays pivotal roles in the immune response and tolerance. Binds to a receptor complex composed of either the high-affinity trimeric IL-2R (IL2RA/CD25, IL2RB/CD122 and IL2RG/CD132) or the low-affinity dimeric IL-2R (IL2RB and IL2RG). Interaction with the receptor leads to oligomerization and conformation changes in the IL-2R subunits resulting in downstream signaling starting with phosphorylation of JAK1 and JAK3. In turn, JAK1 and JAK3 phosphorylate the receptor to form a docking site leading to the phosphorylation of several substrates including STAT5. This process leads to activation of several pathways including STAT, phosphoinositide-3-kinase/PI3K and mitogen-activated protein kinase/MAPK pathways. Functions as a T-cell growth factor and can increase NK-cell cytolytic activity as well. Promotes strong proliferation of activated B-cells and subsequently immunoglobulin production. Plays a pivotal role in regulating the adaptive immune system by controlling the survival and proliferation of regulatory T-cells, which are required for the maintenance of immune tolerance. Moreover, participates in the differentiation and homeostasis of effector T-cell subsets, including Th1, Th2, Th17 as well as memory CD8-positive T-cells. The protein is Interleukin-2 (IL2) of Felis catus (Cat).